A 359-amino-acid polypeptide reads, in one-letter code: Methylthioribose-1-phosphate isomerase (359 aa).

Residues 50–52 (RGA), arginine 93, and glutamine 200 contribute to the substrate site. Catalysis depends on aspartate 241, which acts as the Proton donor. 251–252 (NK) serves as a coordination point for substrate.

Belongs to the eIF-2B alpha/beta/delta subunits family. MtnA subfamily.

The catalysed reaction is 5-(methylsulfanyl)-alpha-D-ribose 1-phosphate = 5-(methylsulfanyl)-D-ribulose 1-phosphate. It participates in amino-acid biosynthesis; L-methionine biosynthesis via salvage pathway; L-methionine from S-methyl-5-thio-alpha-D-ribose 1-phosphate: step 1/6. Its function is as follows. Catalyzes the interconversion of methylthioribose-1-phosphate (MTR-1-P) into methylthioribulose-1-phosphate (MTRu-1-P). In Symbiobacterium thermophilum (strain DSM 24528 / JCM 14929 / IAM 14863 / T), this protein is Methylthioribose-1-phosphate isomerase.